Consider the following 423-residue polypeptide: MFKRYLSSTSSRRFTSILEEKAFQVTTYSRPEDLCITRGKNAKLYDDVNGKEYIDFTAGIAVTALGHANPKVAEILHHQANKLVHSSNLYFTKECLDLSEKIVEKTKQFGGQHDASRVFLCNSGTEANEAALKFAKKHGIMKNPSKQGIVAFENSFHGRTMGALSVTWNSKYRTPFGDLVPHVSFLNLNDEMTKLQSYIETKKDEIAGLIVEPIQGEGGVFPVEVEKLTGLKKICQDNDVIVIHDEIQCGLGRSGKLWAHAYLPSEAHPDIFTSAKALGNGFPIAATIVNEKVNNALRVGDHGTTYGGNPLACSVSNYVLDTIADEAFLKQVSKKSDILQKRLREIQAKYPNQIKTIRGKGLMLGAEFVEPPTEVIKKARELGLLIITAGKSTVRFVPALTIEDELIEEGMDAFEKAIEAVYA.

Residues Met1–Arg13 constitute a mitochondrion transit peptide. Position 276 is an N6-(pyridoxal phosphate)lysine (Lys276).

Belongs to the class-III pyridoxal-phosphate-dependent aminotransferase family. Pyridoxal 5'-phosphate is required as a cofactor.

It localises to the mitochondrion matrix. It carries out the reaction N(2)-acetyl-L-ornithine + 2-oxoglutarate = N-acetyl-L-glutamate 5-semialdehyde + L-glutamate. It participates in amino-acid biosynthesis; L-arginine biosynthesis; N(2)-acetyl-L-ornithine from L-glutamate: step 4/4. Catalyzes the conversion of N-acetylglutamate-gamma-semialdehyde (NAGSA) to N-acetylornithine in arginine biosynthesis. In Saccharomyces cerevisiae (strain ATCC 204508 / S288c) (Baker's yeast), this protein is Acetylornithine aminotransferase, mitochondrial (ARG8).